Reading from the N-terminus, the 591-residue chain is Aspartate--tRNA(Asp/Asn) ligase (591 aa).

Glu-174 lines the L-aspartate pocket. Positions Gln-198–Lys-201 are aspartate. Arg-220 is an L-aspartate binding site. ATP contacts are provided by residues Arg-220–Glu-222 and Gln-229. L-aspartate is bound at residue His-450. Glu-483 contacts ATP. Arg-490 provides a ligand contact to L-aspartate. ATP is bound at residue Gly-535 to Arg-538.

The protein belongs to the class-II aminoacyl-tRNA synthetase family. Type 1 subfamily. As to quaternary structure, homodimer.

The protein localises to the cytoplasm. The catalysed reaction is tRNA(Asx) + L-aspartate + ATP = L-aspartyl-tRNA(Asx) + AMP + diphosphate. Aspartyl-tRNA synthetase with relaxed tRNA specificity since it is able to aspartylate not only its cognate tRNA(Asp) but also tRNA(Asn). Reaction proceeds in two steps: L-aspartate is first activated by ATP to form Asp-AMP and then transferred to the acceptor end of tRNA(Asp/Asn). The protein is Aspartate--tRNA(Asp/Asn) ligase of Pseudomonas fluorescens (strain SBW25).